The chain runs to 344 residues: MSNAITMGIFWHLIGAASAACFYAPFKKVKKWSWETMWSVGGIVSWIILPWTISALLLPDFWAYYSSFSLSTLLPVFLFGAMWGIGNINYGLTMRYLGMSMGIGIAIGITLIVGTLMTPIINGNFDVLINTEGGRMTLLGVLVALIGVGIVTRAGQLKERKMGIKAEEFNLKKGLVLAVMCGIFSAGMSFAMNAAKPMHEAAAALGVDPLYVALPSYVVIMGGGAIINLGFCFIRLAKVKDLSLKADFSLAKPLIIHNVLLSALGGLMWYLQFFFYAWGHARIPAQYDYISWMLHMSFYVLCGGIVGLVLKEWNNTGRRPVTVLSLGCVVIIVAANIVGIGMAN.

10 consecutive transmembrane segments (helical) span residues 4-24 (AITMGIFWHLIGAASAACFYA), 38-58 (WSVGGIVSWIILPWTISALLL), 68-88 (FSLSTLLPVFLFGAMWGIGNI), 101-121 (MGIGIAIGITLIVGTLMTPII), 137-157 (TLLGVLVALIGVGIVTRAGQL), 175-195 (LVLAVMCGIFSAGMSFAMNAA), 214-234 (LPSYVVIMGGGAIINLGFCFI), 259-279 (VLLSALGGLMWYLQFFFYAWG), 290-310 (ISWMLHMSFYVLCGGIVGLVL), and 323-343 (VLSLGCVVIIVAANIVGIGMA).

It belongs to the L-rhamnose transporter (TC 2.A.7.6) family.

The protein resides in the cell inner membrane. The enzyme catalyses L-rhamnopyranose(in) + H(+)(in) = L-rhamnopyranose(out) + H(+)(out). Its function is as follows. Uptake of L-rhamnose across the cytoplasmic membrane with the concomitant transport of protons into the cell (symport system). In Shigella sonnei (strain Ss046), this protein is L-rhamnose-proton symporter.